Here is a 24-residue protein sequence, read N- to C-terminus: DYE-linked aldehyde dehydrogenase, alpha chain (24 aa).

Heterotetramer composed of an alpha, a beta and two gamma chains. Mo-molybdopterin cytosine dinucleotide serves as cofactor.

Functionally, active with aldehydes and formate esters as substrates. In Amycolatopsis methanolica, this protein is DYE-linked aldehyde dehydrogenase, alpha chain.